The primary structure comprises 582 residues: Proline--tRNA ligase (582 aa).

This sequence belongs to the class-II aminoacyl-tRNA synthetase family. ProS type 1 subfamily. As to quaternary structure, homodimer.

It is found in the cytoplasm. The catalysed reaction is tRNA(Pro) + L-proline + ATP = L-prolyl-tRNA(Pro) + AMP + diphosphate. Catalyzes the attachment of proline to tRNA(Pro) in a two-step reaction: proline is first activated by ATP to form Pro-AMP and then transferred to the acceptor end of tRNA(Pro). As ProRS can inadvertently accommodate and process non-cognate amino acids such as alanine and cysteine, to avoid such errors it has two additional distinct editing activities against alanine. One activity is designated as 'pretransfer' editing and involves the tRNA(Pro)-independent hydrolysis of activated Ala-AMP. The other activity is designated 'posttransfer' editing and involves deacylation of mischarged Ala-tRNA(Pro). The misacylated Cys-tRNA(Pro) is not edited by ProRS. This is Proline--tRNA ligase from Mycolicibacterium paratuberculosis (strain ATCC BAA-968 / K-10) (Mycobacterium paratuberculosis).